The chain runs to 233 residues: Leucyl/phenylalanyl-tRNA--protein transferase (233 aa).

The protein belongs to the L/F-transferase family.

The protein resides in the cytoplasm. It catalyses the reaction N-terminal L-lysyl-[protein] + L-leucyl-tRNA(Leu) = N-terminal L-leucyl-L-lysyl-[protein] + tRNA(Leu) + H(+). The catalysed reaction is N-terminal L-arginyl-[protein] + L-leucyl-tRNA(Leu) = N-terminal L-leucyl-L-arginyl-[protein] + tRNA(Leu) + H(+). The enzyme catalyses L-phenylalanyl-tRNA(Phe) + an N-terminal L-alpha-aminoacyl-[protein] = an N-terminal L-phenylalanyl-L-alpha-aminoacyl-[protein] + tRNA(Phe). Its function is as follows. Functions in the N-end rule pathway of protein degradation where it conjugates Leu, Phe and, less efficiently, Met from aminoacyl-tRNAs to the N-termini of proteins containing an N-terminal arginine or lysine. The protein is Leucyl/phenylalanyl-tRNA--protein transferase of Klebsiella pneumoniae subsp. pneumoniae (strain ATCC 700721 / MGH 78578).